A 214-amino-acid chain; its full sequence is Outer-membrane lipoprotein carrier protein (214 aa).

Positions 1 to 24 are cleaved as a signal peptide; the sequence is MKIKLAFAVLLALCLSLSVMPVLA.

The protein belongs to the LolA family. Monomer.

Its subcellular location is the periplasm. Functionally, participates in the translocation of lipoproteins from the inner membrane to the outer membrane. Only forms a complex with a lipoprotein if the residue after the N-terminal Cys is not an aspartate (The Asp acts as a targeting signal to indicate that the lipoprotein should stay in the inner membrane). The protein is Outer-membrane lipoprotein carrier protein of Alkalilimnicola ehrlichii (strain ATCC BAA-1101 / DSM 17681 / MLHE-1).